A 232-amino-acid polypeptide reads, in one-letter code: Mitochondrial import inner membrane translocase subunit Tim21 (232 aa).

The transit peptide at 1–31 (MLPRFLWRPVLCSYRALGSPSRSLTVSYRNL) directs the protein to the mitochondrion. A helical transmembrane segment spans residues 96–116 (FTYFIVVLIGIGVTGGLFYVV).

It belongs to the TIM21 family.

Its subcellular location is the mitochondrion membrane. Its function is as follows. May participate in the translocation of transit peptide-containing proteins across the mitochondrial inner membrane. This chain is Mitochondrial import inner membrane translocase subunit Tim21 (timm21), found in Xenopus laevis (African clawed frog).